A 547-amino-acid polypeptide reads, in one-letter code: Serine beta-lactamase-like protein LACTB, mitochondrial (547 aa).

The N-terminal 115 residues, methionine 1–leucine 115, are a transit peptide targeting the mitochondrion. Positions glycine 62–proline 83 are enriched in low complexity. The disordered stretch occupies residues glycine 62–proline 96. Serine 164 (acyl-ester intermediate) is an active-site residue. N6-succinyllysine is present on residues lysine 283 and lysine 284. 2 positions are modified to N6-acetyllysine: lysine 297 and lysine 342.

Belongs to the peptidase S12 family. In terms of tissue distribution, expressed predominantly in skeletal muscle.

The protein resides in the mitochondrion. Functionally, mitochondrial serine protease that acts as a regulator of mitochondrial lipid metabolism. Acts by decreasing protein levels of PISD, a mitochondrial enzyme that converts phosphatidylserine (PtdSer) to phosphatidylethanolamine (PtdEtn), thereby affecting mitochondrial lipid metabolism. It is unclear whether it acts directly by mediating proteolysis of PISD or by mediating proteolysis of another lipid metabolism protein. Acts as a tumor suppressor that has the ability to inhibit proliferation of multiple types of breast cancer cells: probably by promoting decreased levels of PISD, thereby affecting mitochondrial lipid metabolism. The chain is Serine beta-lactamase-like protein LACTB, mitochondrial from Homo sapiens (Human).